The chain runs to 33 residues: Cysteine-rich venom protein (33 aa).

Residues Asn-1–Ala-33 are disordered. The span at Ser-24–Ala-33 shows a compositional bias: basic residues.

It belongs to the CRISP family. Contains 8 disulfide bonds. Expressed by the venom gland.

The protein resides in the secreted. Its function is as follows. Blocks contraction of smooth muscle elicited by high potassium-induced depolarization, but does not block caffeine-stimulated contraction. May target voltage-gated calcium channels on smooth muscle (Cav). This chain is Cysteine-rich venom protein, found in Naja naja (Indian cobra).